Reading from the N-terminus, the 426-residue chain is Glutamate-1-semialdehyde 2,1-aminomutase 2 (426 aa).

At K265 the chain carries N6-(pyridoxal phosphate)lysine.

It belongs to the class-III pyridoxal-phosphate-dependent aminotransferase family. HemL subfamily. Homodimer. Pyridoxal 5'-phosphate serves as cofactor.

It is found in the cytoplasm. The enzyme catalyses (S)-4-amino-5-oxopentanoate = 5-aminolevulinate. It participates in porphyrin-containing compound metabolism; protoporphyrin-IX biosynthesis; 5-aminolevulinate from L-glutamyl-tRNA(Glu): step 2/2. In Lachnoclostridium phytofermentans (strain ATCC 700394 / DSM 18823 / ISDg) (Clostridium phytofermentans), this protein is Glutamate-1-semialdehyde 2,1-aminomutase 2.